The following is a 312-amino-acid chain: Olfactory receptor 1D5 (312 aa).

Topologically, residues 1–25 (MDGDNQSENSQFLLLGISESPEQQQ) are extracellular. N-linked (GlcNAc...) asparagine glycosylation is present at Asn-5. The helical transmembrane segment at 26 to 49 (ILFWMFLSMYLVTVLGNVLIILAI) threads the bilayer. Over 50-57 (SSDSHLHT) the chain is Cytoplasmic. A helical membrane pass occupies residues 58 to 79 (PMYFFLANLSFTDLFFVTNTIP). Residues 80–100 (KMLVNFQSQNKAISYAGCLTQ) lie on the Extracellular side of the membrane. Cys-97 and Cys-189 are oxidised to a cystine. A helical transmembrane segment spans residues 101 to 120 (LYFLVSLVTLDNLILAVMAY). Residues 121-140 (DRYVAICCPLHYVTAMSPGL) are Cytoplasmic-facing. The helical transmembrane segment at 141 to 158 (CVLLLSLCWGLSVLYGLL) threads the bilayer. The Extracellular segment spans residues 159 to 196 (LTLLLTRVTFCGPREIHYLFCDMYILLRLACSNTHIIH). Residues 197–220 (TVLVATGCFIFLTPLGFMTTSYVC) form a helical membrane-spanning segment. Over 221–237 (IVRTILQIPSASKKYKA) the chain is Cytoplasmic. The chain crosses the membrane as a helical span at residues 238-260 (FSTCASHLGVVSLFYGTLAMVYL). The Extracellular segment spans residues 261–271 (QPLHTYSMKDS). The helical transmembrane segment at 272 to 291 (VATVMYAVVTPMMNPFIYSL) threads the bilayer. Over 292 to 312 (RNKDMHGALGRVLRRLFQRPK) the chain is Cytoplasmic.

This sequence belongs to the G-protein coupled receptor 1 family.

Its subcellular location is the cell membrane. In terms of biological role, odorant receptor. This chain is Olfactory receptor 1D5 (OR1D5), found in Pan paniscus (Pygmy chimpanzee).